The following is a 243-amino-acid chain: F-box protein pof15 (243 aa).

The 46-residue stretch at 28–73 (QTSSTLLPVEVIDSVMQYLPAHDVIQSSFASYPLTLIANKIIRARL) folds into the F-box domain.

It participates in protein modification; protein ubiquitination. Its function is as follows. Probable substrate recognition component of a SCF (SKP1-CUL1-F-box protein) E3 ubiquitin-protein ligase complex that mediates the ubiquitination and subsequent proteasomal degradation of target proteins. The protein is F-box protein pof15 (pof15) of Schizosaccharomyces pombe (strain 972 / ATCC 24843) (Fission yeast).